We begin with the raw amino-acid sequence, 344 residues long: Biotin synthase (344 aa).

Residues 36 to 260 (NQIQISTLLS…MMPTSYIRLS (225 aa)) form the Radical SAM core domain. [4Fe-4S] cluster is bound by residues Cys-51, Cys-55, and Cys-58. Residues Cys-95, Cys-126, Cys-186, and Arg-258 each contribute to the [2Fe-2S] cluster site.

The protein belongs to the radical SAM superfamily. Biotin synthase family. Homodimer. [4Fe-4S] cluster is required as a cofactor. It depends on [2Fe-2S] cluster as a cofactor.

It carries out the reaction (4R,5S)-dethiobiotin + (sulfur carrier)-SH + 2 reduced [2Fe-2S]-[ferredoxin] + 2 S-adenosyl-L-methionine = (sulfur carrier)-H + biotin + 2 5'-deoxyadenosine + 2 L-methionine + 2 oxidized [2Fe-2S]-[ferredoxin]. It participates in cofactor biosynthesis; biotin biosynthesis; biotin from 7,8-diaminononanoate: step 2/2. Catalyzes the conversion of dethiobiotin (DTB) to biotin by the insertion of a sulfur atom into dethiobiotin via a radical-based mechanism. This is Biotin synthase from Buchnera aphidicola subsp. Baizongia pistaciae (strain Bp).